The primary structure comprises 80 residues: Progonadoliberin-1 (80 aa).

A signal peptide spans 1 to 21 (MGIKRALWWMVVCVVVLQVSA). Q22 is modified (pyrrolidone carboxylic acid). G31 carries the post-translational modification Glycine amide.

This sequence belongs to the GnRH family.

It localises to the secreted. Its function is as follows. Stimulates the secretion of gonadotropins. The polypeptide is Progonadoliberin-1 (gnrh1) (Clarias gariepinus (North African catfish)).